A 203-amino-acid chain; its full sequence is MLRSLVLNEKLRARVLERAEEFLLNNKADEEVWFRELVLCILTSNSSFISAYKSMNYILDKILYMDEKEISILLQESGYRFYNLKAKYLYRAKNLYGKVKKTIKEIADKDQMQAREFIATHIYGIGYKEASHFLRNVGYLDLAIIDRHILRFINNLGIPIKLKSKREYLLAESLLRSIANNLNVQVGLLDLFIFFKQTNTIVK.

Catalysis depends on residues Lys128 and Asp146.

The protein belongs to the type-2 OGG1 family.

It catalyses the reaction 2'-deoxyribonucleotide-(2'-deoxyribose 5'-phosphate)-2'-deoxyribonucleotide-DNA = a 3'-end 2'-deoxyribonucleotide-(2,3-dehydro-2,3-deoxyribose 5'-phosphate)-DNA + a 5'-end 5'-phospho-2'-deoxyribonucleoside-DNA + H(+). Functionally, catalyzes the excision of an oxidatively damaged form of guanine (7,8-dihydro-8-oxoguanine = 8-oxoG) from DNA. Also cleaves the DNA backbone at apurinic/apyrimidinic sites (AP sites). The protein is 8-oxoguanine DNA glycosylase/AP lyase of Sulfolobus acidocaldarius (strain ATCC 33909 / DSM 639 / JCM 8929 / NBRC 15157 / NCIMB 11770).